The primary structure comprises 600 residues: ATP-dependent ubiquitin transferase-like protein Cap2 (600 aa).

The interval 1–158 (MSTVVQQVPA…QEKLATTGDA (158 aa)) is E2-like domain. Residue C109 is the For E2-like domain of the active site. A linker domain region spans residues 159–373 (VELPAFPDQS…DQLRTRGEAA (215 aa)). Positions 375–600 (DIRSKKVLII…GTVEKEPHEY (226 aa)) are adenylation plus E1-like domain. C548 (for E1-like domain) is an active-site residue.

In the C-terminal section; belongs to the HesA/MoeB/ThiF family. As to quaternary structure, crystallizes as a Cap2 homodimer bound on each side by a CdnD monomer.

CD-NTase priming component of a CBASS antiviral system. CBASS (cyclic oligonucleotide-based antiphage signaling system) provides immunity against bacteriophages. The CD-NTase protein (CdnD) synthesizes cyclic nucleotides in response to infection; these serve as specific second messenger signals. The signals activate a diverse range of effectors, leading to bacterial cell death and thus abortive phage infection. A type II-C(AAG) CBASS system. Functionally, primes CdnD; acts as a protein transferase, conjugating CdnD, the CD-NTase, to unidentified target(s) in the cell via an E1-E2 ubiquitin transferase-like mechanism. Upon phage infection CdnD activates and makes cyclic nucleotides. During the conjugation reaction CdnD is transiently attached to AMP. Protein conjugation requires ATP. In terms of biological role, protects E.coli against phage T2 infection. When the cdnD-cap2-cap3-cap4 operon is introduced in E.coli there is a more than 10(3) decrease in the efficiency of T2 plaque formation. The operon does not protect against phage T5 and only about 10-fold against T7. This Enterobacter hormaechei subsp. hoffmannii (strain UCI 50) protein is ATP-dependent ubiquitin transferase-like protein Cap2.